A 65-amino-acid chain; its full sequence is Large ribosomal subunit protein bL35 (65 aa).

This sequence belongs to the bacterial ribosomal protein bL35 family.

The sequence is that of Large ribosomal subunit protein bL35 from Sorangium cellulosum (strain So ce56) (Polyangium cellulosum (strain So ce56)).